The chain runs to 531 residues: UDP-glucuronosyltransferase 1A5 (531 aa).

An N-terminal signal peptide occupies residues 1–25 (MGLHVTLQGLAGLLLLLYALPWAEG). Residues Asn-116, Asn-131, Asn-139, Asn-293, and Asn-431 are each glycosylated (N-linked (GlcNAc...) asparagine). Residues 489–505 (VIGFLLAIVLTVVFIVY) form a helical membrane-spanning segment.

It belongs to the UDP-glycosyltransferase family. In terms of assembly, homodimer. Homooligomer. Interacts with UGT1A1, UGT1A3, UGT1A4, UGT1A6, UGT1A7, UGT1A8, UGT1A9 and UGT1A10 to form heterodimers.

The protein localises to the endoplasmic reticulum membrane. It carries out the reaction glucuronate acceptor + UDP-alpha-D-glucuronate = acceptor beta-D-glucuronoside + UDP + H(+). It catalyses the reaction zolasartan + UDP-alpha-D-glucuronate = zolarsartan-1-N-beta-D-glucuronide + UDP. UDP-glucuronosyltransferase (UGT) that catalyzes phase II biotransformation reactions in which lipophilic substrates are conjugated with glucuronic acid to increase the metabolite's water solubility, thereby facilitating excretion into either the urine or bile. Essential for the elimination and detoxification of drugs, xenobiotics and endogenous compounds. Involved in the glucuronidation of the AGTR1 angiotensin receptor antagonist zolarsatan, a drug which can inhibit the effect of angiotensin II. The protein is UDP-glucuronosyltransferase 1A5 of Rattus norvegicus (Rat).